The sequence spans 236 residues: uncharacterized protein (236 aa).

The first 22 residues, 1–22, serve as a signal peptide directing secretion; sequence MEFKMQKIILGMLVVTASNAMA.

This is an uncharacterized protein from Pasteurella multocida (strain Pm70).